Consider the following 56-residue polypeptide: Large ribosomal subunit protein bL33 (56 aa).

The segment covering 1–12 (MASKGGREKIKL) has biased composition (basic and acidic residues). The interval 1–27 (MASKGGREKIKLESTAGTGHFYTTNKN) is disordered.

This sequence belongs to the bacterial ribosomal protein bL33 family.

The polypeptide is Large ribosomal subunit protein bL33 (Leptothrix cholodnii (strain ATCC 51168 / LMG 8142 / SP-6) (Leptothrix discophora (strain SP-6))).